We begin with the raw amino-acid sequence, 566 residues long: Arginine--tRNA ligase (566 aa).

Residues 121 to 131 carry the 'HIGH' region motif; that stretch reads PNIAKPMSMGH.

Belongs to the class-I aminoacyl-tRNA synthetase family. As to quaternary structure, monomer.

The protein localises to the cytoplasm. It catalyses the reaction tRNA(Arg) + L-arginine + ATP = L-arginyl-tRNA(Arg) + AMP + diphosphate. This is Arginine--tRNA ligase from Oenococcus oeni (strain ATCC BAA-331 / PSU-1).